The sequence spans 129 residues: Putative CC-type chemokine FPV061 (129 aa).

The protein belongs to the intercrine beta (chemokine CC) family. Highly divergent.

This is Putative CC-type chemokine FPV061 from Fowlpox virus (strain NVSL) (FPV).